A 173-amino-acid chain; its full sequence is Translationally-controlled tumor protein homolog (173 aa).

The region spanning 1–173 (MIIYKDILTG…WKHGLEEYKV (173 aa)) is the TCTP domain.

The protein belongs to the TCTP family.

It localises to the cytoplasm. Its subcellular location is the cytoskeleton. Functionally, involved in protein synthesis. Involved in microtubule stabilization. This is Translationally-controlled tumor protein homolog from Aspergillus oryzae (strain ATCC 42149 / RIB 40) (Yellow koji mold).